The sequence spans 434 residues: ATP-dependent protease ATPase subunit HslU (434 aa).

ATP contacts are provided by residues Ile-18, 60-65, Asp-247, Glu-312, and Arg-384; that span reads GVGKTE.

The protein belongs to the ClpX chaperone family. HslU subfamily. As to quaternary structure, a double ring-shaped homohexamer of HslV is capped on each side by a ring-shaped HslU homohexamer. The assembly of the HslU/HslV complex is dependent on binding of ATP.

Its subcellular location is the cytoplasm. In terms of biological role, ATPase subunit of a proteasome-like degradation complex; this subunit has chaperone activity. The binding of ATP and its subsequent hydrolysis by HslU are essential for unfolding of protein substrates subsequently hydrolyzed by HslV. HslU recognizes the N-terminal part of its protein substrates and unfolds these before they are guided to HslV for hydrolysis. The polypeptide is ATP-dependent protease ATPase subunit HslU (Brucella melitensis biotype 1 (strain ATCC 23456 / CCUG 17765 / NCTC 10094 / 16M)).